The following is a 209-amino-acid chain: MTYCRKANQTSYPFILPDLPYAKESFKPHFTCETFDYHHGKHHNSYVQNLNNLLKDREELQKKDLEGIIKWSSKNSEVTVFNNASQIWNHTFFWYSIKPHGGGKPSGKVFEQISQDFGSFEQFCEQFKQEALGQFGSGWVWVVYNNNKLQIIKTSNADTPIVNLMKPILVCDVWEHAYYIDYRNKRSDYIDIFISHMINWKFVEDNLIQ.

Fe(3+) is bound by residues histidine 38, histidine 90, aspartate 172, and histidine 176. The Mn(2+) site is built by histidine 38, histidine 90, aspartate 172, and histidine 176.

It belongs to the iron/manganese superoxide dismutase family. Mn(2+) serves as cofactor. Requires Fe(3+) as cofactor.

It carries out the reaction 2 superoxide + 2 H(+) = H2O2 + O2. Functionally, destroys superoxide anion radicals which are normally produced within the cells and which are toxic to biological systems. Catalyzes the dismutation of superoxide anion radicals into O2 and H2O2 by successive reduction and oxidation of the transition metal ion at the active site. This Rickettsia typhi (strain ATCC VR-144 / Wilmington) protein is Superoxide dismutase [Mn/Fe] (sodB).